Reading from the N-terminus, the 942-residue chain is Alanine--tRNA ligase (942 aa).

Zn(2+)-binding residues include His-586, His-590, Cys-695, and His-699.

This sequence belongs to the class-II aminoacyl-tRNA synthetase family. Zn(2+) serves as cofactor.

It is found in the cytoplasm. The catalysed reaction is tRNA(Ala) + L-alanine + ATP = L-alanyl-tRNA(Ala) + AMP + diphosphate. Its function is as follows. Catalyzes the attachment of alanine to tRNA(Ala) in a two-step reaction: alanine is first activated by ATP to form Ala-AMP and then transferred to the acceptor end of tRNA(Ala). Also edits incorrectly charged Ser-tRNA(Ala) and Gly-tRNA(Ala) via its editing domain. In Akkermansia muciniphila (strain ATCC BAA-835 / DSM 22959 / JCM 33894 / BCRC 81048 / CCUG 64013 / CIP 107961 / Muc), this protein is Alanine--tRNA ligase.